Reading from the N-terminus, the 620-residue chain is Probable potassium transport system protein Kup 1 (620 aa).

Helical transmembrane passes span 10 to 30, 50 to 70, 102 to 122, 138 to 158, 168 to 188, 211 to 231, 246 to 266, 284 to 304, 336 to 356, 368 to 388, 393 to 413, and 415 to 435; these read LLIS…LYAL, VLSL…VIVI, MLLG…TPAI, LTPY…MIQK, FGPV…VNIV, MMSF…EALY, WFAL…ALLL, MVVP…QAVI, IYIP…VIGF, IAVT…MALM, WIAV…FFFA, and IIKV…SFTV.

It belongs to the HAK/KUP transporter (TC 2.A.72) family.

The protein localises to the cell inner membrane. It catalyses the reaction K(+)(in) + H(+)(in) = K(+)(out) + H(+)(out). Transport of potassium into the cell. Likely operates as a K(+):H(+) symporter. The sequence is that of Probable potassium transport system protein Kup 1 from Rhodopseudomonas palustris (strain BisB18).